A 923-amino-acid chain; its full sequence is MTELQAKDPRTLHTSGAAPSPTHVGSPLLARLDPDPFQGSQHSDASSVVSPIPISLDRLLFSRSCQAQELPDEKTQNQQSLSDVEGAFSGVEASRRRSRNPRAPEKDSRLLDSVLDTLLAPSGPEQSQTSPPACEAITSWCLFGPELPEDPRSVPATKGLLSPLMSRPESKAGDSSGTGAGQKVLPKAVSPPRQLLLPTSGSAHWPGAGVKPSQQPATVEVEEDGGLETEGSAGPLLKSKPRALEGMCSGGGVTANAPGAAPGGVTLVPKEDSRFSAPRVSLEQDAPVAPGRSPLATTVVDFIHVPILPLNHALLAARTRQLLEGDSYDGGAAAQVPFAPPRGSPSAPSPPVPCGDFPDCTYPPEGDPKEDGFPVYGEFQPPGLKIKEEEEGTEAASRSPRPYLLAGASAATFPDFPLPPRPPRAPPSRPGEAAVAAPSAAVSPVSSSGSALECILYKAEGAPPTQGSFAPLPCKPPAASSCLLPRDSLPAAPTSSAAPAIYPPLGLNGLPQLGYQAAVLKDSLPQVYPPYLNYLRPDSEASQSPQYGFDSLPQKICLICGDEASGCHYGVLTCGSCKVFFKRAMEGQHNYLCAGRNDCIVDKIRRKNCPACRLRKCCQAGMVLGGRKFKKFNKVRVMRALDGVALPQSVAFPNESQTLGQRITFSPNQEIQLVPPLINLLMSIEPDVVYAGHDNTKPDTSSSLLTSLNQLGERQLLSVVKWSKSLPGFRNLHIDDQITLIQYSWMSLMVFGLGWRSYKHVSGQMLYFAPDLILNEQRMKELSFYSLCLTMWQIPQEFVKLQVTHEEFLCMKVLLLLNTIPLEGLRSQSQFEEMRSSYIRELIKAIGLRQKGVVPSSQRFYQLTKLLDSLHDLVKQLHLYCLNTFIQSRALAVEFPEMMSEVIAAQLPKILAGMVKPLLFHKK.

Over residues 1–11 (MTELQAKDPRT) the composition is skewed to basic and acidic residues. The disordered stretch occupies residues 1 to 49 (MTELQAKDPRTLHTSGAAPSPTHVGSPLLARLDPDPFQGSQHSDASSVV). The AF3; mediates transcriptional activation (in isoform B) stretch occupies residues 1 to 164 (MTELQAKDPR…PATKGLLSPL (164 aa)). Residues 1–556 (MTELQAKDPR…YGFDSLPQKI (556 aa)) are modulating, Pro-Rich. K7 participates in a covalent cross-link: Glycyl lysine isopeptide (Lys-Gly) (interchain with G-Cter in SUMO). S20 carries the phosphoserine modification. Residues 38 to 49 (QGSQHSDASSVV) are compositionally biased toward polar residues. Positions 56–60 (LDRLL) match the LXXL motif 1 motif. The segment at 67-111 (AQELPDEKTQNQQSLSDVEGAFSGVEASRRRSRNPRAPEKDSRLL) is disordered. S82 carries the post-translational modification Phosphoserine. The short motif at 115 to 119 (LDTLL) is the LXXL motif 2 element. S130 and S162 each carry phosphoserine. The segment at 152–239 (RSVPATKGLL…EGSAGPLLKS (88 aa)) is disordered. The interval 165-304 (MSRPESKAGD…LATTVVDFIH (140 aa)) is mediates transcriptional transrepression (in isoform A). Positions 184–188 (VLPKA) match the Nuclear localization signal motif. Phosphoserine occurs at positions 190 and 213. S293 is modified (phosphoserine; by MAPK1). The tract at residues 333–371 (AAQVPFAPPRGSPSAPSPPVPCGDFPDCTYPPEGDPKED) is disordered. The span at 338-353 (FAPPRGSPSAPSPPVP) shows a compositional bias: pro residues. At S344 the chain carries Phosphoserine; by MAPK. K387 participates in a covalent cross-link: Glycyl lysine isopeptide (Lys-Gly) (interchain with G-Cter in SUMO); alternate. K387 participates in a covalent cross-link: Glycyl lysine isopeptide (Lys-Gly) (interchain with G-Cter in ubiquitin); alternate. The residue at position 399 (S399) is a Phosphoserine; by CDK2. A disordered region spans residues 412 to 435 (TFPDFPLPPRPPRAPPSRPGEAAV). A compositionally biased stretch (pro residues) spans 416–429 (FPLPPRPPRAPPSR). The segment at 450–536 (SALECILYKA…VYPPYLNYLR (87 aa)) is AF1; mediates transcriptional activation. A Glycyl lysine isopeptide (Lys-Gly) (interchain with G-Cter in SUMO) cross-link involves residue K521. 2 NR C4-type zinc fingers span residues 557-577 (CLICGDEASGCHYGVLTCGSC) and 593-617 (CAGRNDCIVDKIRRKNCPACRLRKC). A DNA-binding region (nuclear receptor) is located at residues 557–629 (CLICGDEASG…AGMVLGGRKF (73 aa)). S666 carries the post-translational modification Phosphoserine. The 235-residue stretch at 669–903 (QEIQLVPPLI…EFPEMMSEVI (235 aa)) folds into the NR LBD domain. The interval 677–923 (LINLLMSIEP…MVKPLLFHKK (247 aa)) is AF2; mediates transcriptional activation. R756 serves as a coordination point for progesterone.

It belongs to the nuclear hormone receptor family. NR3 subfamily. Interacts with SMARD1 and UNC45A. Interacts with CUEDC2; the interaction promotes ubiquitination, decreases sumoylation, and represses transcriptional activity. Interacts with PIAS3; the interaction promotes sumoylation of PR in a hormone-dependent manner, inhibits DNA-binding, and alters nuclear export. Interacts with SP1; the interaction requires ligand-induced phosphorylation on Ser-344. Interacts with PRMT2. Isoform A interacts with NCOR2. Isoform B (but not isoform A) interacts with NCOA2 and NCOA1. Isoform B (but not isoform A) interacts with KLF9. Interacts with GTF2B. Post-translationally, phosphorylated on multiple serine sites. Several of these sites are hormone-dependent. Phosphorylation on Ser-293 is highly hormone-dependent and modulates ubiquitination and sumoylation on Lys-387. Phosphorylation on Ser-344 also requires induction by hormone. Basal phosphorylation on Ser-82, Ser-190 and Ser-399 is increased in response to progesterone and can be phosphorylated in vitro by the CDK2-A1 complex. Increased levels of phosphorylation on Ser-399 also in the presence of EGF, heregulin, IGF, PMA and FBS. Phosphorylation at this site by CDK2 is ligand-independent, and increases nuclear translocation and transcriptional activity. Phosphorylation at Ser-293, but not at Ser-190, is impaired during the G(2)/M phase of the cell cycle. Phosphorylation on Ser-344 by ERK1/2 MAPK is required for interaction with SP1. Sumoylation is hormone-dependent and represses transcriptional activity. Sumoylation on all three sites is enhanced by PIAS3. Desumoylated by SENP1. Sumoylation on Lys-387, the main site of sumoylation, is repressed by ubiquitination on the same site, and modulated by phosphorylation at Ser-293. In terms of processing, ubiquitination is hormone-dependent and represses sumoylation on the same site. Promoted by MAPK-mediated phosphorylation on Ser-293. Ubiquitinated by UBR5, leading to its degradation: UBR5 specifically recognizes and binds ligand-bound PGR when it is not associated with coactivators (NCOAs). In presence of NCOAs, the UBR5-degron is not accessible, preventing its ubiquitination and degradation. Post-translationally, palmitoylated by ZDHHC7 and ZDHHC21. Palmitoylation is required for plasma membrane targeting and for rapid intracellular signaling via ERK and AKT kinases and cAMP generation. As to expression, isoform A and isoform B are expressed in the pituitary.

It localises to the nucleus. The protein localises to the cytoplasm. Functionally, the steroid hormones and their receptors are involved in the regulation of eukaryotic gene expression and affect cellular proliferation and differentiation in target tissues. Depending on the isoform, progesterone receptor functions as a transcriptional activator or repressor. Ligand-dependent transdominant repressor of steroid hormone receptor transcriptional activity including repression of its isoform B, MR and ER. Transrepressional activity may involve recruitment of corepressor NCOR2. Its function is as follows. Transcriptional activator of several progesteron-dependent promoters in a variety of cell types. Involved in activation of SRC-dependent MAPK signaling on hormone stimulation. The sequence is that of Progesterone receptor (Pgr) from Rattus norvegicus (Rat).